The chain runs to 379 residues: Chaperone protein DnaJ (379 aa).

The J domain maps to 5–70; it reads DYYEILEVSR…EKRAAYDRYG (66 aa). A CR-type zinc finger spans residues 135–213; sequence GIKVPISYVT…CGGSGRVRNE (79 aa). Residues Cys148, Cys151, Cys165, Cys168, Cys187, Cys190, Cys201, and Cys204 each contribute to the Zn(2+) site. 4 CXXCXGXG motif repeats span residues 148-155, 165-172, 187-194, and 201-208; these read CSSCSGIG, CGNCNGAG, CNVCNGEG, and CRRCGGSG.

The protein belongs to the DnaJ family. In terms of assembly, homodimer. It depends on Zn(2+) as a cofactor.

The protein resides in the cytoplasm. In terms of biological role, participates actively in the response to hyperosmotic and heat shock by preventing the aggregation of stress-denatured proteins and by disaggregating proteins, also in an autonomous, DnaK-independent fashion. Unfolded proteins bind initially to DnaJ; upon interaction with the DnaJ-bound protein, DnaK hydrolyzes its bound ATP, resulting in the formation of a stable complex. GrpE releases ADP from DnaK; ATP binding to DnaK triggers the release of the substrate protein, thus completing the reaction cycle. Several rounds of ATP-dependent interactions between DnaJ, DnaK and GrpE are required for fully efficient folding. Also involved, together with DnaK and GrpE, in the DNA replication of plasmids through activation of initiation proteins. The polypeptide is Chaperone protein DnaJ (Anaplasma marginale (strain Florida)).